A 594-amino-acid chain; its full sequence is MQAQALDNVSKAAFSRREPRAVRTTLKVFPRKNWLDECMTELSPKTMHKRDLGCSGLYRISKVLITSASLEIKLANVINTLPALLPMRRGAIVVVGAEGEPETTATFGVEPPSSGARHIAAKAAIDRIVAKGAPLVVPDTCKSELFQDELQSIVSGTGQVTFIGVPMKADQETLGTLWIDRAKDGAATRTQFEEEVRFLSMVANLAARAVRLNGHESRDSRPIGEEGDRKISGGDKELPEPTRQRPTRIDWIVGESPALRQVVESVKVVAQTNSAVLLRGESGTGKEFFAKAIHELSPRRKKPFVKLNCAALSAGVLESELFGHEKGAFTGAISQRAGRFELADGGTLLLDEIGEISPAFQAKLLRVLQEGELERVGGTKTLKVDVRLICATNKDLETAVAEGEFRADLYYRINVVPLFLPPLRERNGDIPRLAKVFLDRFNRENNRNLEFTPAALEILSRCKFPGNVRELENCVRRTATLARSATIVPSDFSCQNDQCFSSMLGKTADRPLGSHSLNGLAMSKRLPVESPASLGYPAGPGGLTVAPHLSDRELLISAMEKAGWVQAKAARILGLTPRQVGYALRRHHIQVKKI.

A GAF domain is found at 69-210; the sequence is SLEIKLANVI…MVANLAARAV (142 aa). Positions 213-243 are disordered; sequence NGHESRDSRPIGEEGDRKISGGDKELPEPTR. The Sigma-54 factor interaction domain occupies 252 to 480; that stretch reads IVGESPALRQ…LENCVRRTAT (229 aa). Residues 280-287 and 343-352 contribute to the ATP site; these read GESGTGKE and ADGGTLLLDE. The segment at 481–551 is inter-domain linker; it reads LARSATIVPS…GLTVAPHLSD (71 aa). Residues Cys-494 and Cys-499 each contribute to the a divalent metal cation site. The segment at 552 to 594 is C-terminal DNA-binding domain; it reads RELLISAMEKAGWVQAKAARILGLTPRQVGYALRRHHIQVKKI. Positions 566-585 form a DNA-binding region, H-T-H motif; it reads QAKAARILGLTPRQVGYALR.

Interacts with sigma-54.

Required for activation of most nif operons, which are directly involved in nitrogen fixation. This Sinorhizobium fredii (strain NBRC 101917 / NGR234) protein is Nif-specific regulatory protein (nifA).